The sequence spans 430 residues: Serine--tRNA ligase (430 aa).

Residue 237 to 239 participates in L-serine binding; the sequence is TAE. Residue 268–270 coordinates ATP; sequence RSE. E291 contacts L-serine. Residue 355 to 358 participates in ATP binding; that stretch reads EISS. An L-serine-binding site is contributed by S391.

The protein belongs to the class-II aminoacyl-tRNA synthetase family. Type-1 seryl-tRNA synthetase subfamily. Homodimer. The tRNA molecule binds across the dimer.

Its subcellular location is the cytoplasm. It catalyses the reaction tRNA(Ser) + L-serine + ATP = L-seryl-tRNA(Ser) + AMP + diphosphate + H(+). The catalysed reaction is tRNA(Sec) + L-serine + ATP = L-seryl-tRNA(Sec) + AMP + diphosphate + H(+). The protein operates within aminoacyl-tRNA biosynthesis; selenocysteinyl-tRNA(Sec) biosynthesis; L-seryl-tRNA(Sec) from L-serine and tRNA(Sec): step 1/1. Its function is as follows. Catalyzes the attachment of serine to tRNA(Ser). Is also able to aminoacylate tRNA(Sec) with serine, to form the misacylated tRNA L-seryl-tRNA(Sec), which will be further converted into selenocysteinyl-tRNA(Sec). This is Serine--tRNA ligase from Escherichia fergusonii (strain ATCC 35469 / DSM 13698 / CCUG 18766 / IAM 14443 / JCM 21226 / LMG 7866 / NBRC 102419 / NCTC 12128 / CDC 0568-73).